Consider the following 371-residue polypeptide: Sporulation-specific protein 2 (371 aa).

The protein resides in the spore wall. Essential for sporulation and seems to have a role at the time of, or after, initiation of nuclear division. Appears to have a role in outer spore wall formation. The sequence is that of Sporulation-specific protein 2 (SSP2) from Saccharomyces cerevisiae (strain ATCC 204508 / S288c) (Baker's yeast).